Consider the following 232-residue polypeptide: Large ribosomal subunit protein uL1 (232 aa).

This sequence belongs to the universal ribosomal protein uL1 family. Part of the 50S ribosomal subunit.

Binds directly to 23S rRNA. The L1 stalk is quite mobile in the ribosome, and is involved in E site tRNA release. Its function is as follows. Protein L1 is also a translational repressor protein, it controls the translation of the L11 operon by binding to its mRNA. The sequence is that of Large ribosomal subunit protein uL1 from Alkaliphilus metalliredigens (strain QYMF).